A 113-amino-acid chain; its full sequence is Protein translation factor SUI1 homolog (113 aa).

The protein belongs to the SUI1 family.

Probably involved in translation. This chain is Protein translation factor SUI1 homolog, found in Salix bakko (Japanese willow).